A 332-amino-acid polypeptide reads, in one-letter code: tRNA-dihydrouridine synthase B (332 aa).

Residues 16–18 (PMA) and Gln70 contribute to the FMN site. Cys100 functions as the Proton donor in the catalytic mechanism. Residues Lys139, 200–202 (NGD), and 224–225 (GR) each bind FMN.

Belongs to the Dus family. DusB subfamily. FMN serves as cofactor.

The catalysed reaction is a 5,6-dihydrouridine in tRNA + NAD(+) = a uridine in tRNA + NADH + H(+). It carries out the reaction a 5,6-dihydrouridine in tRNA + NADP(+) = a uridine in tRNA + NADPH + H(+). Its function is as follows. Catalyzes the synthesis of 5,6-dihydrouridine (D), a modified base found in the D-loop of most tRNAs, via the reduction of the C5-C6 double bond in target uridines. The polypeptide is tRNA-dihydrouridine synthase B (Pasteurella multocida (strain Pm70)).